The following is a 150-amino-acid chain: MKPADWLILQRKVRFGDCDSAGVIHFHNLLKWSHEAWEESIEIYGIPYKDIFPDFSIRKSQIVFPIVNCEANFLAPIKIGDFLKVKIAPHKINTHLFQVNSFFIKNGNKVAEGKIIHCSLDIDSRNKIELPDQLERWIEASNVSTNLKEC.

The active site involves D19.

This sequence belongs to the 4-hydroxybenzoyl-CoA thioesterase family. DHNA-CoA hydrolase subfamily.

It catalyses the reaction 1,4-dihydroxy-2-naphthoyl-CoA + H2O = 1,4-dihydroxy-2-naphthoate + CoA + H(+). The protein operates within cofactor biosynthesis; phylloquinone biosynthesis. It participates in quinol/quinone metabolism; 1,4-dihydroxy-2-naphthoate biosynthesis; 1,4-dihydroxy-2-naphthoate from chorismate: step 7/7. Functionally, catalyzes the hydrolysis of 1,4-dihydroxy-2-naphthoyl-CoA (DHNA-CoA) to 1,4-dihydroxy-2-naphthoate (DHNA), a reaction involved in phylloquinone (vitamin K1) biosynthesis. The polypeptide is 1,4-dihydroxy-2-naphthoyl-CoA hydrolase (Prochlorococcus marinus (strain MIT 9215)).